The sequence spans 183 residues: Negative modulator of initiation of replication (183 aa).

The interval 43 to 70 (VNDTQPVSAPAPSKAAPSAGNESRPQDR) is disordered. Residues 50–61 (SAPAPSKAAPSA) are compositionally biased toward low complexity. Interaction with DNA regions lie at residues 89–90 (AV), 118–122 (RTRIY), and 152–158 (NTNTGRK).

This sequence belongs to the SeqA family. In terms of assembly, homodimer. Polymerizes to form helical filaments.

Its subcellular location is the cytoplasm. Negative regulator of replication initiation, which contributes to regulation of DNA replication and ensures that replication initiation occurs exactly once per chromosome per cell cycle. Binds to pairs of hemimethylated GATC sequences in the oriC region, thus preventing assembly of replication proteins and re-initiation at newly replicated origins. Repression is relieved when the region becomes fully methylated. This chain is Negative modulator of initiation of replication, found in Pantoea ananatis (strain AJ13355).